The following is a 369-amino-acid chain: Anhydro-N-acetylmuramic acid kinase (369 aa).

12-19 (GTSLDGVD) is an ATP binding site.

This sequence belongs to the anhydro-N-acetylmuramic acid kinase family.

The catalysed reaction is 1,6-anhydro-N-acetyl-beta-muramate + ATP + H2O = N-acetyl-D-muramate 6-phosphate + ADP + H(+). The protein operates within amino-sugar metabolism; 1,6-anhydro-N-acetylmuramate degradation. It participates in cell wall biogenesis; peptidoglycan recycling. Its function is as follows. Catalyzes the specific phosphorylation of 1,6-anhydro-N-acetylmuramic acid (anhMurNAc) with the simultaneous cleavage of the 1,6-anhydro ring, generating MurNAc-6-P. Is required for the utilization of anhMurNAc either imported from the medium or derived from its own cell wall murein, and thus plays a role in cell wall recycling. The polypeptide is Anhydro-N-acetylmuramic acid kinase (Escherichia coli O1:K1 / APEC).